The chain runs to 348 residues: Protein RecA (348 aa).

Glycine 64–threonine 71 lines the ATP pocket. Positions glutamate 324–leucine 335 are enriched in basic and acidic residues. The tract at residues glutamate 324 to glutamate 348 is disordered. Acidic residues predominate over residues alanine 336–glutamate 348.

The protein belongs to the RecA family.

Its subcellular location is the cytoplasm. Can catalyze the hydrolysis of ATP in the presence of single-stranded DNA, the ATP-dependent uptake of single-stranded DNA by duplex DNA, and the ATP-dependent hybridization of homologous single-stranded DNAs. It interacts with LexA causing its activation and leading to its autocatalytic cleavage. The protein is Protein RecA of Listeria ivanovii.